The chain runs to 366 residues: Chorismate synthase (366 aa).

2 residues coordinate NADP(+): Arg-48 and Arg-54. Residues 125–127 (RSS), 238–239 (NA), Gly-278, 293–297 (KPTSS), and Arg-319 contribute to the FMN site.

Belongs to the chorismate synthase family. In terms of assembly, homotetramer. FMNH2 is required as a cofactor.

The enzyme catalyses 5-O-(1-carboxyvinyl)-3-phosphoshikimate = chorismate + phosphate. It functions in the pathway metabolic intermediate biosynthesis; chorismate biosynthesis; chorismate from D-erythrose 4-phosphate and phosphoenolpyruvate: step 7/7. Functionally, catalyzes the anti-1,4-elimination of the C-3 phosphate and the C-6 proR hydrogen from 5-enolpyruvylshikimate-3-phosphate (EPSP) to yield chorismate, which is the branch point compound that serves as the starting substrate for the three terminal pathways of aromatic amino acid biosynthesis. This reaction introduces a second double bond into the aromatic ring system. The protein is Chorismate synthase of Ralstonia nicotianae (strain ATCC BAA-1114 / GMI1000) (Ralstonia solanacearum).